Here is a 1112-residue protein sequence, read N- to C-terminus: DNA-directed RNA polymerase subunit beta (1112 aa).

A disordered region spans residues V1087–D1112.

It belongs to the RNA polymerase beta chain family. In cyanobacteria the RNAP catalytic core is composed of 2 alpha, 1 beta, 1 beta', 1 gamma and 1 omega subunit. When a sigma factor is associated with the core the holoenzyme is formed, which can initiate transcription.

It catalyses the reaction RNA(n) + a ribonucleoside 5'-triphosphate = RNA(n+1) + diphosphate. Functionally, DNA-dependent RNA polymerase catalyzes the transcription of DNA into RNA using the four ribonucleoside triphosphates as substrates. The chain is DNA-directed RNA polymerase subunit beta from Gloeobacter violaceus (strain ATCC 29082 / PCC 7421).